Reading from the N-terminus, the 47-residue chain is Delta-ctenitoxin-Pr2d (47 aa).

Intrachain disulfides connect cysteine 3/cysteine 17, cysteine 10/cysteine 23, cysteine 14/cysteine 46, cysteine 16/cysteine 31, and cysteine 25/cysteine 29.

Expressed by the venom gland.

It localises to the secreted. Functionally, blocks voltage-gated sodium channels (Nav). Causes rapid general spastic paralysis and death when injected in mice at dose levels of less than 2 ug per mouse. The protein is Delta-ctenitoxin-Pr2d of Phoneutria reidyi (Brazilian Amazonian armed spider).